The chain runs to 134 residues: ATP synthase epsilon chain (134 aa).

The segment covering Ala94 to His104 has biased composition (basic and acidic residues). The segment at Ala94–Asn115 is disordered.

Belongs to the ATPase epsilon chain family. In terms of assembly, F-type ATPases have 2 components, CF(1) - the catalytic core - and CF(0) - the membrane proton channel. CF(1) has five subunits: alpha(3), beta(3), gamma(1), delta(1), epsilon(1). CF(0) has three main subunits: a, b and c.

It is found in the cell membrane. Produces ATP from ADP in the presence of a proton gradient across the membrane. The sequence is that of ATP synthase epsilon chain from Staphylococcus epidermidis (strain ATCC 12228 / FDA PCI 1200).